The sequence spans 176 residues: UPF0262 protein GbCGDNIH1_1393 (176 aa).

The protein belongs to the UPF0262 family.

The protein is UPF0262 protein GbCGDNIH1_1393 of Granulibacter bethesdensis (strain ATCC BAA-1260 / CGDNIH1).